The following is a 635-amino-acid chain: MAKNYTVADVVNIDSDSDSDDDNGGVIGMVPSLASLIENQKVSIADAATVAPRETLECRSFWKAGENFVIPSSVTLTAIGMVEHARVHPKFLHSNATSHKWAFGAIAELLDNAVDEIQNGATVVKIDKINIVKDNTPALVFQDNGGGMDPNGIRKCMSLGYSSKKSNTTIGQYGNGFKTSTMRLGADAMVFSRSTRGGKSTQSIGLLSYTFLRKTGQDDVIVPMIDFDISSDSPQPIIYGSPGDWSTNLNILLKWSPFSTMVELLQQFEDIGTHGTKVIIYNLWLNDEGIYELSFDDDDVDIRLRDENAQDGKRLHAKTLEVRSHISYRYRHSLRAYISMLYLKKFKNFKIILRGVSVAQFNIADEFRHPETIMYKPQAAAVDYAATGIKVGFIKEAPKLPICGFNVYHKNRLIRPFWKVVLEGSTRGNGVMGVLEANFIEPAHDKQDFERSSLFLRLEARLKRITSDYWQNHCHIFGYQTAQIPADKSKRTVIPDQPPTVNTYNPSPLPSDRISHGGPIIREINLSNATSSRTAAVAAPHLRNYTGLRNNFQPVQLNPQPPAAGDTGNNLVGKLAAEIREENLQLFMRCEEYVKKENEVEQTVKSLEKELEEIKSKCAQLALLVDAKKKEMQQV.

Residues arginine 491–serine 511 form a disordered region. Residues methionine 588–valine 635 adopt a coiled-coil conformation.

It belongs to the MORC ATPase protein family. As to quaternary structure, homodimer and heterodimer with MORC6. Component of an RNA-directed DNA methylation (RdDM) complex that contains at least MORC6, MORC1/CRT1, MORC2, SWI3D and SUVH9. Binds directly to SUVH2 and SUVH9. Interacts with the resistance proteins RCY1, RPM1, SNC1, RPP8, SSI4 and RPS2. The interactions with various resistance proteins are disrupted when these resistance proteins are activated. Interacts with the PAMP recognition receptor FLS2. The cofactor is Mg(2+). Mn(2+) serves as cofactor. Expressed constitutively.

Its subcellular location is the nucleus. The protein localises to the endosome. In terms of biological role, mediator of defense signaling triggered by distinct classes of R proteins. Required during hypersensitive response (HR) that confers disease resistance to turnip crinkle virus (TCV). Exhibits ATPase activity. Contributes to resistance against Pseudomonas syringae and Hyaloperonospora arabidopsidis, at early stages prior to cytosolic calcium ions Ca(2+) accumulation. Required for pathogen-associated molecular pattern (PAMP)-triggered immunity (PTI), basal resistance, non-host resistance and systemic acquired resistance (SAR). Binds DNA/RNA in a non-specific manner and exhibits endonuclease activity. Probably involved in DNA repair. Required for both RPP8- and SSI4-mediated resistance responses, thus being involved in both TIR- and CC-NB-LRR pathways. Involved in RNA-directed DNA methylation (RdDM) as a component of the RdDM machinery and required for gene silencing. May also be involved in the regulation of chromatin architecture to maintain gene silencing. This Arabidopsis thaliana (Mouse-ear cress) protein is Protein MICRORCHIDIA 1.